Reading from the N-terminus, the 413-residue chain is Multifunctional CCA protein (413 aa).

Residues G8 and R11 each coordinate ATP. CTP contacts are provided by G8 and R11. Mg(2+)-binding residues include D21 and D23. ATP contacts are provided by R91, R143, and R146. R91, R143, and R146 together coordinate CTP. The HD domain occupies 232-333; sequence TGVHVMMVVD…VRLFERSDAL (102 aa).

Belongs to the tRNA nucleotidyltransferase/poly(A) polymerase family. Bacterial CCA-adding enzyme type 1 subfamily. Monomer. Can also form homodimers and oligomers. Requires Mg(2+) as cofactor. It depends on Ni(2+) as a cofactor.

It catalyses the reaction a tRNA precursor + 2 CTP + ATP = a tRNA with a 3' CCA end + 3 diphosphate. It carries out the reaction a tRNA with a 3' CCA end + 2 CTP + ATP = a tRNA with a 3' CCACCA end + 3 diphosphate. In terms of biological role, catalyzes the addition and repair of the essential 3'-terminal CCA sequence in tRNAs without using a nucleic acid template. Adds these three nucleotides in the order of C, C, and A to the tRNA nucleotide-73, using CTP and ATP as substrates and producing inorganic pyrophosphate. tRNA 3'-terminal CCA addition is required both for tRNA processing and repair. Also involved in tRNA surveillance by mediating tandem CCA addition to generate a CCACCA at the 3' terminus of unstable tRNAs. While stable tRNAs receive only 3'-terminal CCA, unstable tRNAs are marked with CCACCA and rapidly degraded. The polypeptide is Multifunctional CCA protein (Burkholderia cenocepacia (strain ATCC BAA-245 / DSM 16553 / LMG 16656 / NCTC 13227 / J2315 / CF5610) (Burkholderia cepacia (strain J2315))).